A 593-amino-acid polypeptide reads, in one-letter code: Monoterpene synthase 7, chloroplastic (593 aa).

The transit peptide at 1-39 (MSVSLSFAASATFGFRGGLGGFSRPAAAIKQWRCLPRIQ) directs the protein to the chloroplast. Asp-348, Asp-352, Asp-491, and Glu-499 together coordinate Mg(2+). Residues 348 to 352 (DDVYD) carry the DDXXD motif motif.

The protein belongs to the terpene synthase family. Tpsa subfamily. Requires Mg(2+) as cofactor. Mn(2+) serves as cofactor. In terms of tissue distribution, highly expressed in flowers, petals and sepals, but almost undetectable in vegetative organs.

Its subcellular location is the plastid. The protein localises to the chloroplast. It catalyses the reaction (2E)-geranyl diphosphate = sabinene + diphosphate. The catalysed reaction is (2E)-geranyl diphosphate = terpinolene + diphosphate. It carries out the reaction (2E)-geranyl diphosphate = alpha-pinene + diphosphate. The enzyme catalyses (2E)-geranyl diphosphate = beta-pinene + diphosphate. It catalyses the reaction (2E)-geranyl diphosphate = beta-myrcene + diphosphate. The catalysed reaction is (2E)-geranyl diphosphate = alpha-terpinene + diphosphate. It carries out the reaction (2E)-geranyl diphosphate = beta-phellandrene + diphosphate. The enzyme catalyses (2E)-geranyl diphosphate = gamma-terpinene + diphosphate. The protein operates within secondary metabolite biosynthesis; terpenoid biosynthesis. In terms of biological role, monoterpene synthase involved in the biosynthesis of volatile compounds present in floral scent. Mediates the conversion of (2E)-geranyl diphosphate (GPP) into sabinene and sub-products such as alpha-thujene, alpha-pinene, beta-pinene, myrcene, alpha-phellandrene, alpha-terpinene, beta-phellandrene, gamma-terpinene and terpinolene. Unable to use farnesyl diphosphate (FPP) as substrate. In Hedychium coronarium (White butterfly ginger-lily), this protein is Monoterpene synthase 7, chloroplastic.